Here is an 813-residue protein sequence, read N- to C-terminus: Raf homolog serine/threonine-protein kinase (813 aa).

The disordered stretch occupies residues methionine 1–proline 79. The segment covering serine 9 to proline 23 has biased composition (low complexity). One can recognise an RBD domain in the interval lysine 85–glutamate 161. The Phorbol-ester/DAG-type zinc finger occupies lysine 170–cysteine 217. Zn(2+)-binding residues include cysteine 184, cysteine 187, cysteine 198, cysteine 201, histidine 206, cysteine 209, and cysteine 217. Polar residues-rich tracts occupy residues threonine 258–aspartate 273 and serine 291–proline 301. 3 disordered regions span residues threonine 258–asparagine 315, glutamine 338–histidine 358, and threonine 383–glutamate 472. Basic and acidic residues predominate over residues glutamine 338–threonine 348. The segment covering glycine 386 to glycine 399 has biased composition (low complexity). Polar residues predominate over residues threonine 406–leucine 421. Over residues serine 453–arginine 462 the composition is skewed to basic and acidic residues. One can recognise a Protein kinase domain in the interval phenylalanine 481–leucine 748. ATP-binding positions include valine 487–valine 495 and lysine 507. Residue aspartate 602 is the Proton acceptor of the active site.

Belongs to the protein kinase superfamily. TKL Ser/Thr protein kinase family. RAF subfamily. In terms of assembly, interacts with cdf-1 in a zinc-dependent manner which promotes its activity. Zn(2+) serves as cofactor.

The catalysed reaction is L-seryl-[protein] + ATP = O-phospho-L-seryl-[protein] + ADP + H(+). The enzyme catalyses L-threonyl-[protein] + ATP = O-phospho-L-threonyl-[protein] + ADP + H(+). Functionally, protein kinase that participates in the induction of vulva and has roles in fertility and viability. Acts downstream of the Ras protein let-60. Required for progression of developing oocytes through the pachytene stage. Plays a role in responses to M.nematophilum-mediated bacterial infection by promoting tail swelling and preventing constipation. Positively regulates lifespan upstream of mek-2 and mpk-1. This is Raf homolog serine/threonine-protein kinase (lin-45) from Caenorhabditis elegans.